Consider the following 131-residue polypeptide: D-ribose pyranase (131 aa).

Histidine 20 (proton donor) is an active-site residue. Substrate is bound by residues aspartate 28, histidine 98, and 120–122 (YAN).

This sequence belongs to the RbsD / FucU family. RbsD subfamily. Homodecamer.

The protein localises to the cytoplasm. It catalyses the reaction beta-D-ribopyranose = beta-D-ribofuranose. Its pathway is carbohydrate metabolism; D-ribose degradation; D-ribose 5-phosphate from beta-D-ribopyranose: step 1/2. Functionally, catalyzes the interconversion of beta-pyran and beta-furan forms of D-ribose. The sequence is that of D-ribose pyranase from Bacillus velezensis (strain DSM 23117 / BGSC 10A6 / LMG 26770 / FZB42) (Bacillus amyloliquefaciens subsp. plantarum).